The sequence spans 218 residues: N-(5'-phosphoribosyl)anthranilate isomerase (218 aa).

Belongs to the TrpF family.

It catalyses the reaction N-(5-phospho-beta-D-ribosyl)anthranilate = 1-(2-carboxyphenylamino)-1-deoxy-D-ribulose 5-phosphate. The protein operates within amino-acid biosynthesis; L-tryptophan biosynthesis; L-tryptophan from chorismate: step 3/5. This chain is N-(5'-phosphoribosyl)anthranilate isomerase, found in Stenotrophomonas maltophilia (strain K279a).